Reading from the N-terminus, the 505-residue chain is Calcium/calmodulin-dependent protein kinase kinase 1 (505 aa).

The disordered stretch occupies residues 28-66 (LEEADEGPEPARNGVDPPPRARAASVIPGSASRPTPVRP). Phosphoserine is present on residues Ser67 and Ser74. The residue at position 78 (Arg78) is an Asymmetric dimethylarginine. The interval 84–105 (LGAQVGPYSTGPASHISPRSWR) is disordered. The residue at position 100 (Ser100) is a Phosphoserine. At Thr108 the chain carries Phosphothreonine. In terms of domain architecture, Protein kinase spans 128–409 (YKLQSEIGKG…VSDIKLHPWV (282 aa)). Residues 134 to 142 (IGKGAYGVV) and Lys157 each bind ATP. The interval 167-189 (QYGFPRRPPPRGSQATQGGPAKQ) is RP domain. Asp275 serves as the catalytic Proton acceptor. Residues 435–440 (KNSVRL) form an autoinhibitory domain region. The interval 438 to 463 (VRLIPSWTTVILVKSMLRKRSFGNPF) is calmodulin-binding. Phosphoserine occurs at positions 458, 475, and 492. The tract at residues 460-505 (GNPFEPQARREERSMSAPGSLLMKEGCGEGCKSPELPGVQEDEAAS) is disordered.

This sequence belongs to the protein kinase superfamily. Ser/Thr protein kinase family. As to quaternary structure, interacts with CAMK4 and calmodulin. Appears to be autophosphorylated in a Ca(2+)/calmodulin-dependent manner. Phosphorylated at multiple sites by PRCAKA/PKA. Phosphorylation of Ser-458 is blocked upon binding to Ca(2+)/calmodulin. In vitro, phosphorylated by CAMK1 and CAMK4. Widely expressed. Differentially expressed in various brain regions.

It localises to the cytoplasm. It is found in the nucleus. It carries out the reaction L-seryl-[protein] + ATP = O-phospho-L-seryl-[protein] + ADP + H(+). The enzyme catalyses L-threonyl-[protein] + ATP = O-phospho-L-threonyl-[protein] + ADP + H(+). Activated by Ca(2+)/calmodulin. Binding of calmodulin may relieve intrasteric autoinhibition. Partially inhibited upon phosphorylation by PRCAKA/PKA. May be regulated through phosphorylation by CAMK1 and CAMK4. In terms of biological role, calcium/calmodulin-dependent protein kinase that belongs to a proposed calcium-triggered signaling cascade involved in a number of cellular processes. Phosphorylates CAMK1, CAMK1D, CAMK1G and CAMK4. Involved in regulating cell apoptosis. Promotes cell survival by phosphorylating AKT1/PKB that inhibits pro-apoptotic BAD/Bcl2-antagonist of cell death. The polypeptide is Calcium/calmodulin-dependent protein kinase kinase 1 (Camkk1) (Mus musculus (Mouse)).